The chain runs to 284 residues: Tropomyosin (284 aa).

Residues 1–273 adopt a coiled-coil conformation; that stretch reads MEAIKKKMQA…KEKYKSISDE (273 aa).

It belongs to the tropomyosin family. Homodimer. In terms of tissue distribution, ubiquitous, but especially prevalent in the anterior muscle bundles associated with legs. Expression in the mid and posterior regions is probably related to the numerous, small muscle bundles associated with the digestive and reproductive systems (at protein level).

Tropomyosin, in association with the troponin complex, plays a central role in the calcium dependent regulation of muscle contraction. The polypeptide is Tropomyosin (Psoroptes ovis (Sheep scab mite)).